We begin with the raw amino-acid sequence, 311 residues long: Heparan sulfate glucosamine 3-O-sulfotransferase 1 (311 aa).

The signal sequence occupies residues 1 to 20; it reads MTLLLLGAVLLVAQPQLVPS. N-linked (GlcNAc...) asparagine glycosylation is present at N52. 3'-phosphoadenylyl sulfate is bound by residues 68 to 72, R151, and S159; that span reads KGGTR. N-linked (GlcNAc...) asparagine glycosylation is found at N196, N246, and N253. Y259 serves as a coordination point for 3'-phosphoadenylyl sulfate. C260 and C269 are joined by a disulfide. 3'-phosphoadenylyl sulfate is bound at residue 274–278; it reads KGRAH.

It belongs to the sulfotransferase 1 family.

The protein resides in the golgi apparatus lumen. The catalysed reaction is alpha-D-glucosaminyl-[heparan sulfate](n) + 3'-phosphoadenylyl sulfate = 3-sulfo-alpha-D-glucosaminyl-[heparan sulfate](n) + adenosine 3',5'-bisphosphate + H(+). In terms of biological role, sulfotransferase that utilizes 3'-phospho-5'-adenylyl sulfate (PAPS) to catalyze the transfer of a sulfo group to position 3 of glucosamine residues in heparan. Catalyzes the rate limiting step in the biosynthesis of heparan sulfate (HSact). This modification is a crucial step in the biosynthesis of anticoagulant heparan sulfate as it completes the structure of the antithrombin pentasaccharide binding site. The sequence is that of Heparan sulfate glucosamine 3-O-sulfotransferase 1 (Hs3st1) from Rattus norvegicus (Rat).